The primary structure comprises 691 residues: DNA ligase (691 aa).

Residues 41-45 (DAEFD), 91-92 (SL), and Glu121 each bind NAD(+). Lys123 functions as the N6-AMP-lysine intermediate in the catalytic mechanism. Arg144, Glu184, Lys300, and Lys324 together coordinate NAD(+). The Zn(2+) site is built by Cys418, Cys421, Cys437, and Cys443. Residues 607-691 (SVPRTLAGLT…LLADGPASRT (85 aa)) enclose the BRCT domain.

Belongs to the NAD-dependent DNA ligase family. LigA subfamily. It depends on Mg(2+) as a cofactor. Mn(2+) is required as a cofactor.

It carries out the reaction NAD(+) + (deoxyribonucleotide)n-3'-hydroxyl + 5'-phospho-(deoxyribonucleotide)m = (deoxyribonucleotide)n+m + AMP + beta-nicotinamide D-nucleotide.. Functionally, DNA ligase that catalyzes the formation of phosphodiester linkages between 5'-phosphoryl and 3'-hydroxyl groups in double-stranded DNA using NAD as a coenzyme and as the energy source for the reaction. It is essential for DNA replication and repair of damaged DNA. The chain is DNA ligase from Mycobacterium tuberculosis (strain ATCC 25177 / H37Ra).